Consider the following 447-residue polypeptide: Phosphoglucosamine mutase (447 aa).

The active-site Phosphoserine intermediate is the Ser101. Mg(2+) is bound by residues Ser101, Asp242, Asp244, and Asp246. Position 101 is a phosphoserine (Ser101).

Belongs to the phosphohexose mutase family. The cofactor is Mg(2+). In terms of processing, activated by phosphorylation.

It catalyses the reaction alpha-D-glucosamine 1-phosphate = D-glucosamine 6-phosphate. In terms of biological role, catalyzes the conversion of glucosamine-6-phosphate to glucosamine-1-phosphate. The polypeptide is Phosphoglucosamine mutase (Methylobacterium radiotolerans (strain ATCC 27329 / DSM 1819 / JCM 2831 / NBRC 15690 / NCIMB 10815 / 0-1)).